Reading from the N-terminus, the 366-residue chain is Chorismate synthase (366 aa).

NADP(+) contacts are provided by R48 and R54. Residues 131–133 (RAS), 243–244 (NA), G288, 303–307 (KPTPS), and R329 each bind FMN.

The protein belongs to the chorismate synthase family. As to quaternary structure, homotetramer. Requires FMNH2 as cofactor.

The catalysed reaction is 5-O-(1-carboxyvinyl)-3-phosphoshikimate = chorismate + phosphate. It participates in metabolic intermediate biosynthesis; chorismate biosynthesis; chorismate from D-erythrose 4-phosphate and phosphoenolpyruvate: step 7/7. Functionally, catalyzes the anti-1,4-elimination of the C-3 phosphate and the C-6 proR hydrogen from 5-enolpyruvylshikimate-3-phosphate (EPSP) to yield chorismate, which is the branch point compound that serves as the starting substrate for the three terminal pathways of aromatic amino acid biosynthesis. This reaction introduces a second double bond into the aromatic ring system. This Bartonella quintana (strain Toulouse) (Rochalimaea quintana) protein is Chorismate synthase.